A 1396-amino-acid polypeptide reads, in one-letter code: DNA-directed RNA polymerase subunit beta' (1396 aa).

Residues C72, C74, C87, and C90 each coordinate Zn(2+). D463, D465, and D467 together coordinate Mg(2+). Residues C814, C889, C896, and C899 each coordinate Zn(2+).

It belongs to the RNA polymerase beta' chain family. In terms of assembly, the RNAP catalytic core consists of 2 alpha, 1 beta, 1 beta' and 1 omega subunit. When a sigma factor is associated with the core the holoenzyme is formed, which can initiate transcription. The cofactor is Mg(2+). Requires Zn(2+) as cofactor.

It carries out the reaction RNA(n) + a ribonucleoside 5'-triphosphate = RNA(n+1) + diphosphate. Functionally, DNA-dependent RNA polymerase catalyzes the transcription of DNA into RNA using the four ribonucleoside triphosphates as substrates. In Chlamydia trachomatis serovar A (strain ATCC VR-571B / DSM 19440 / HAR-13), this protein is DNA-directed RNA polymerase subunit beta'.